Here is a 371-residue protein sequence, read N- to C-terminus: Cytochrome b (371 aa).

A run of 4 helical transmembrane segments spans residues 25 to 45 (FGSM…FLAV), 69 to 90 (WMMQ…YIHI), 105 to 125 (WMSG…GYVL), and 170 to 190 (FFAL…LHII). The heme b site is built by His75 and His89. Residues His174 and His188 each contribute to the heme b site. His193 serves as a coordination point for a ubiquinone. Transmembrane regions (helical) follow at residues 218 to 238 (YKDL…VSFF), 280 to 300 (LGGA…PFMH), 312 to 332 (LSQL…WAAT), and 339 to 358 (YIMI…LSIP).

The protein belongs to the cytochrome b family. In terms of assembly, the cytochrome bc1 complex contains 3 respiratory subunits (MT-CYB, CYC1 and UQCRFS1), 2 core proteins (UQCRC1 and UQCRC2) and probably 6 low-molecular weight proteins. The cofactor is heme b.

It localises to the mitochondrion inner membrane. Component of the ubiquinol-cytochrome c reductase complex (complex III or cytochrome b-c1 complex) that is part of the mitochondrial respiratory chain. The b-c1 complex mediates electron transfer from ubiquinol to cytochrome c. Contributes to the generation of a proton gradient across the mitochondrial membrane that is then used for ATP synthesis. The chain is Cytochrome b (MT-CYB) from Simalia amethistina (Amethystine python).